Reading from the N-terminus, the 421-residue chain is Nuclear envelope integral membrane protein 2 (421 aa).

The first 22 residues, 1-22 (MLPRLWWLVLWLQPLATLPASA), serve as a signal peptide directing secretion. The next 6 membrane-spanning stretches (helical) occupy residues 64–84 (YMWSTVQVTVTSPGLLNIVYI), 147–167 (NIVDFKLFLVFVTGIFLFLYA), 175–195 (VFYYSSGTVLGILMTLVFVLL), 206–226 (TFGALMIGCWFASVYVLCQLM), 238–258 (MYILGYVVVVGLCSFAACYSH), and 281–301 (LVYTGVAAPQFAYAVLIVLLF).

This sequence belongs to the NEMP family. In the ovary, highly expressed in somatic cells.

It localises to the nucleus inner membrane. This is Nuclear envelope integral membrane protein 2 (Nemp2) from Mus musculus (Mouse).